The following is a 357-amino-acid chain: Arginine kinase Pro c 2.0101 (357 aa).

Residues 9–91 form the Phosphagen kinase N-terminal domain; sequence KLEEGFKKLE…FDPIIEDYHK (83 aa). 64–68 serves as a coordination point for L-arginine; the sequence is GVGIY. The Phosphagen kinase C-terminal domain occupies 119–356; that stretch reads FVISTRVRCG…LELIKIEKEM (238 aa). ATP-binding positions include 122 to 126 and histidine 185; that span reads STRVR. An L-arginine-binding site is contributed by glutamate 225. An ATP-binding site is contributed by arginine 229. L-arginine is bound at residue cysteine 271. ATP is bound by residues 280-284 and 309-314; these read RASVH and RGTRGE. Glutamate 314 is a binding site for L-arginine.

The protein belongs to the ATP:guanido phosphotransferase family. Post-translationally, glycosylated. Muscle (at protein level).

The catalysed reaction is L-arginine + ATP = N(omega)-phospho-L-arginine + ADP + H(+). Catalyzes the reversible transfer of high energy ATP gamma-phosphate group to L-arginine. This Procambarus clarkii (Red swamp crayfish) protein is Arginine kinase Pro c 2.0101.